The primary structure comprises 133 residues: Protein msa (133 aa).

Helical transmembrane passes span 3-23, 27-47, 55-75, and 103-123; these read YLILSLVANLLVFGVLSAIGL, ILAAMMMILVIPITISGILFF, YIFFNILFIDFYYYIYNVHLM, and FGFDEILFFTLYLLLILIILY.

The protein resides in the cell membrane. Functionally, accessory element involved in the expression of sarA and several virulence factors. Modulates SarA production and/or function in a strain-dependent manner. Affects the transcription of the accessory gene regulator (agr) and genes encoding virulence factors including alpha toxin (hla) and protein A (spa). This Staphylococcus aureus (strain bovine RF122 / ET3-1) protein is Protein msa (msa).